We begin with the raw amino-acid sequence, 218 residues long: Uracil-DNA glycosylase (218 aa).

Residue aspartate 68 is the Proton acceptor of the active site.

This sequence belongs to the uracil-DNA glycosylase (UDG) superfamily. UNG family. Homodimer. Interacts with protein OPG148. Component of the Uracil-DNA glycosylase(UDG)-OPG148-polymerase complex; OPG148 and UDG form a heterodimeric processivity factor that associates with OPG71 to form the processive polymerase holoenzyme.

It catalyses the reaction Hydrolyzes single-stranded DNA or mismatched double-stranded DNA and polynucleotides, releasing free uracil.. In terms of biological role, plays an essential role in viral replication as a component of the DNA polymerase processivity factor. Excises uracil residues from the DNA which can arise as a result of misincorporation of dUMP residues by DNA polymerase or due to deamination of cytosine. The polypeptide is Uracil-DNA glycosylase (OPG116) (Vaccinia virus (strain Ankara) (VACV)).